Consider the following 56-residue polypeptide: Secreted virulence factor CLU5a (56 aa).

Positions 1–18 (MKVSLTLLATLCASLASA) are cleaved as a signal peptide.

Belongs to the MC69 virulence factor family. Homodimer; disulfide-linked. Dimerization can possibly extend to multimerisation.

The protein resides in the secreted. Functionally, secreted protein required for appressorial penetration of intact host epidermal cells and for pathogenicit, but not for subsequent biotrophic and necrotrophic colonization of leaves. In Colletotrichum graminicola (strain M1.001 / M2 / FGSC 10212) (Maize anthracnose fungus), this protein is Secreted virulence factor CLU5a.